A 499-amino-acid chain; its full sequence is L-asparagine permease (499 aa).

Helical transmembrane passes span 34–54 (QVQM…GAGA), 58–78 (MAGP…FFIL), 109–129 (VAGW…ITAV), 146–166 (VFAL…VKWF), 171–191 (FWFA…GTVF), 219–239 (LLPA…IEMV), 264–284 (IGLF…WSAY), 298–318 (LGVP…ALSS), 353–373 (YAGI…NYLV), 378–398 (FEIV…FIIV), 422–442 (APFT…LMAF), and 448–468 (TYTI…WFGV).

The protein belongs to the amino acid-polyamine-organocation (APC) superfamily. Amino acid transporter (AAT) (TC 2.A.3.1) family.

The protein localises to the cell inner membrane. The protein is L-asparagine permease (ansP) of Escherichia coli (strain K12).